The chain runs to 758 residues: Calcium up-regulated protein E (758 aa).

Positions 1–22 are disordered; it reads MINIEDISKSSNQSEEKQLKST. Ricin B-type lectin domains are found at residues 25–145 and 156–288; these read KPKY…WTTF and GYFQ…WIAN.

This sequence belongs to the cup family.

The protein localises to the cytoplasm. Its subcellular location is the membrane. Its function is as follows. May play an important role in stabilizing and/or regulating the cell membrane during Ca(2+) stress or certain stages of development. The protein is Calcium up-regulated protein E (cupE) of Dictyostelium discoideum (Social amoeba).